Consider the following 438-residue polypeptide: Trigger factor (438 aa).

In terms of domain architecture, PPIase FKBP-type spans 162–247 (GDRVNINYQG…LNKVEAPKLP (86 aa)).

The protein belongs to the FKBP-type PPIase family. Tig subfamily.

It is found in the cytoplasm. The enzyme catalyses [protein]-peptidylproline (omega=180) = [protein]-peptidylproline (omega=0). Its function is as follows. Involved in protein export. Acts as a chaperone by maintaining the newly synthesized protein in an open conformation. Functions as a peptidyl-prolyl cis-trans isomerase. The protein is Trigger factor of Nitrosomonas eutropha (strain DSM 101675 / C91 / Nm57).